Consider the following 157-residue polypeptide: 2-C-methyl-D-erythritol 2,4-cyclodiphosphate synthase (157 aa).

Positions 8 and 10 each coordinate a divalent metal cation. 4-CDP-2-C-methyl-D-erythritol 2-phosphate is bound by residues 8–10 (DVH) and 34–35 (HS). His-42 contacts a divalent metal cation. Residues 56-58 (DIG), 132-135 (TTNE), and Arg-142 contribute to the 4-CDP-2-C-methyl-D-erythritol 2-phosphate site.

This sequence belongs to the IspF family. As to quaternary structure, homotrimer. The cofactor is a divalent metal cation.

The enzyme catalyses 4-CDP-2-C-methyl-D-erythritol 2-phosphate = 2-C-methyl-D-erythritol 2,4-cyclic diphosphate + CMP. The protein operates within isoprenoid biosynthesis; isopentenyl diphosphate biosynthesis via DXP pathway; isopentenyl diphosphate from 1-deoxy-D-xylulose 5-phosphate: step 4/6. Its function is as follows. Involved in the biosynthesis of isopentenyl diphosphate (IPP) and dimethylallyl diphosphate (DMAPP), two major building blocks of isoprenoid compounds. Catalyzes the conversion of 4-diphosphocytidyl-2-C-methyl-D-erythritol 2-phosphate (CDP-ME2P) to 2-C-methyl-D-erythritol 2,4-cyclodiphosphate (ME-CPP) with a corresponding release of cytidine 5-monophosphate (CMP). This chain is 2-C-methyl-D-erythritol 2,4-cyclodiphosphate synthase, found in Chlorobaculum tepidum (strain ATCC 49652 / DSM 12025 / NBRC 103806 / TLS) (Chlorobium tepidum).